The chain runs to 172 residues: Translationally-controlled tumor protein (172 aa).

Residues 1 to 172 (MIIYRDLISH…FKDGLEMEKC (172 aa)) form the TCTP domain. The residue at position 46 (S46) is a Phosphoserine; by PLK1. Position 53 is a phosphoserine (S53). S64 is modified (phosphoserine; by PLK1). Residues 70 to 172 (VDIVMNHHLQ…FKDGLEMEKC (103 aa)) form a required for reduction of TSC22D1 protein stability region.

The protein belongs to the TCTP family. As to quaternary structure, homodimer. Interacts with STEAP3. Interacts with TSC22D1; interaction results in the destabilization of TSC22D1 protein. As to expression, found in several healthy and tumoral cells including erythrocytes, hepatocytes, macrophages, platelets, keratinocytes, erythroleukemia cells, gliomas, melanomas, hepatoblastomas, and lymphomas. It cannot be detected in kidney and renal cell carcinoma (RCC). Expressed in placenta and prostate.

Its subcellular location is the cytoplasm. Involved in calcium binding and microtubule stabilization. Acts as a negative regulator of TSC22D1-mediated apoptosis, via interaction with and destabilization of TSC22D1 protein. This is Translationally-controlled tumor protein (TPT1) from Homo sapiens (Human).